A 129-amino-acid polypeptide reads, in one-letter code: Acetophenone carboxylase beta subunit (129 aa).

In terms of assembly, acetophenone carboxylase consists of five subunits; a heterooctameric subcomplex of two alpha (Apc1), two beta (Apc2), two gamma (Apc3) and two delta (Apc4) subunits assembles with the epsilon (Apc5) subunit in an unknown stoichiometry. Mg(2+) serves as cofactor. It depends on Mn(2+) as a cofactor.

It localises to the cytoplasm. It carries out the reaction acetophenone + hydrogencarbonate + 2 ATP + H2O = 3-oxo-3-phenylpropanoate + 2 ADP + 2 phosphate + 2 H(+). With respect to regulation, inhibited by zinc ions, carbamoylphosphate and beta,gamma-imido-ATP. In terms of biological role, catalyzes the carboxylation of acetophenone to form 3-oxo-3-phenylpropanoate (benzoylacetate) in the anaerobic catabolism of ethylbenzene. Also carboxylates propiophenone at the same rate and 4-acetyl-pyridine at lower rates. The sequence is that of Acetophenone carboxylase beta subunit (apc2) from Aromatoleum aromaticum (strain DSM 19018 / LMG 30748 / EbN1) (Azoarcus sp. (strain EbN1)).